Here is a 146-residue protein sequence, read N- to C-terminus: D-aminoacyl-tRNA deacylase (146 aa).

The Gly-cisPro motif, important for rejection of L-amino acids signature appears at 138-139; sequence GP.

It belongs to the DTD family. As to quaternary structure, homodimer.

It is found in the cytoplasm. The enzyme catalyses glycyl-tRNA(Ala) + H2O = tRNA(Ala) + glycine + H(+). It catalyses the reaction a D-aminoacyl-tRNA + H2O = a tRNA + a D-alpha-amino acid + H(+). Its function is as follows. An aminoacyl-tRNA editing enzyme that deacylates mischarged D-aminoacyl-tRNAs. Also deacylates mischarged glycyl-tRNA(Ala), protecting cells against glycine mischarging by AlaRS. Acts via tRNA-based rather than protein-based catalysis; rejects L-amino acids rather than detecting D-amino acids in the active site. By recycling D-aminoacyl-tRNA to D-amino acids and free tRNA molecules, this enzyme counteracts the toxicity associated with the formation of D-aminoacyl-tRNA entities in vivo and helps enforce protein L-homochirality. The chain is D-aminoacyl-tRNA deacylase from Tolumonas auensis (strain DSM 9187 / NBRC 110442 / TA 4).